The primary structure comprises 159 residues: Cyclic pyranopterin monophosphate synthase (159 aa).

Substrate is bound by residues 76 to 78 and 114 to 115; these read MCH and ME. Asp-129 is a catalytic residue.

It belongs to the MoaC family. As to quaternary structure, homohexamer; trimer of dimers.

It catalyses the reaction (8S)-3',8-cyclo-7,8-dihydroguanosine 5'-triphosphate = cyclic pyranopterin phosphate + diphosphate. It participates in cofactor biosynthesis; molybdopterin biosynthesis. Catalyzes the conversion of (8S)-3',8-cyclo-7,8-dihydroguanosine 5'-triphosphate to cyclic pyranopterin monophosphate (cPMP). This Natranaerobius thermophilus (strain ATCC BAA-1301 / DSM 18059 / JW/NM-WN-LF) protein is Cyclic pyranopterin monophosphate synthase.